Reading from the N-terminus, the 342-residue chain is Ribosomal RNA small subunit methyltransferase C (342 aa).

This sequence belongs to the methyltransferase superfamily. RsmC family. As to quaternary structure, monomer.

It is found in the cytoplasm. The enzyme catalyses guanosine(1207) in 16S rRNA + S-adenosyl-L-methionine = N(2)-methylguanosine(1207) in 16S rRNA + S-adenosyl-L-homocysteine + H(+). In terms of biological role, specifically methylates the guanine in position 1207 of 16S rRNA in the 30S particle. This is Ribosomal RNA small subunit methyltransferase C from Erwinia tasmaniensis (strain DSM 17950 / CFBP 7177 / CIP 109463 / NCPPB 4357 / Et1/99).